Consider the following 491-residue polypeptide: Anthranilate synthase component 1 (491 aa).

Residues Ser49 and 271–273 (PYL) each bind L-tryptophan. 306-307 (GT) is a binding site for chorismate. Glu333 is a binding site for Mg(2+). Chorismate contacts are provided by residues Tyr421, Arg441, 455 to 457 (GAG), and Gly457. A Mg(2+)-binding site is contributed by Glu470.

Belongs to the anthranilate synthase component I family. In terms of assembly, heterotetramer consisting of two non-identical subunits: a beta subunit (TrpG) and a large alpha subunit (TrpE). The cofactor is Mg(2+).

It carries out the reaction chorismate + L-glutamine = anthranilate + pyruvate + L-glutamate + H(+). It participates in amino-acid biosynthesis; L-tryptophan biosynthesis; L-tryptophan from chorismate: step 1/5. Feedback inhibited by tryptophan. Its function is as follows. Part of a heterotetrameric complex that catalyzes the two-step biosynthesis of anthranilate, an intermediate in the biosynthesis of L-tryptophan. In the first step, the glutamine-binding beta subunit (TrpG) of anthranilate synthase (AS) provides the glutamine amidotransferase activity which generates ammonia as a substrate that, along with chorismate, is used in the second step, catalyzed by the large alpha subunit of AS (TrpE) to produce anthranilate. In the absence of TrpG, TrpE can synthesize anthranilate directly from chorismate and high concentrations of ammonia. The sequence is that of Anthranilate synthase component 1 (trpE) from Neisseria meningitidis serogroup C / serotype 2a (strain ATCC 700532 / DSM 15464 / FAM18).